A 516-amino-acid chain; its full sequence is High-affinity nitrate transporter 2.3 (516 aa).

The next 12 helical transmembrane spans lie at 52 to 72, 76 to 96, 112 to 132, 142 to 162, 172 to 192, 209 to 229, 265 to 285, 299 to 319, 335 to 354, 367 to 387, 395 to 415, and 425 to 445; these read WFSFFCCFVSTFAAPPLLPLI, LGLTATDIGNAGIASVSGAVF, LASASLILLTTPAVYCSSIIQ, FFTGISLASFVSAQFWMSSMF, GVAGGWGNLGGGAVQLLMPLV, IAFFIPGLMQTFSAIAVLAFG, WILALTYGYSFGVELTIDNVV, TAGLIAASFGMANIISRPGGG, LWGLWTVQTIGGVLCVVLGI, VLFSFFVQAACGLTFGIVPFV, ISGMTGGGGNVGAVLTQYIFF, and GIKYMGLMIIACTLPVMLIYF. The disordered stretch occupies residues 489–516; the sequence is SVREGGRSSANGGQPRHTVPVDASPAGV.

Belongs to the major facilitator superfamily. Nitrate/nitrite porter (TC 2.A.1.8) family. Heterotetramer composed of two NRT2.3 and two NAR2.1. Isoform 1 interacts with NAR2.1, but not isoform 2. Expressed in the stelar cells of both primary and lateral roots, particularly at the site of lateral root emergence, root-shoot junction zone, vascular tissues of adventitious root primordia, leaves, germ tips and seed scutellum.

The protein localises to the cell membrane. Functionally, involved in nitrate transport, but does not seem to be able to mediate transport by its own. Acts as a dual component transporter with NAR2.1. Imports nitrate with high affinity when expressed with NAR2.1 in a heterologous system (Xenopus oocytes). Plays a key role in long-distance nitrate transport from root to shoot particularly at low external nitrate supply. The sequence is that of High-affinity nitrate transporter 2.3 (NRT2.3) from Oryza sativa subsp. japonica (Rice).